A 376-amino-acid polypeptide reads, in one-letter code: Carbamoyl phosphate synthase small chain (376 aa).

A CPSase region spans residues 1 to 187; the sequence is MRAFLALEDG…AADGAYAWPG (187 aa). Residues S45, G239, and G241 each coordinate L-glutamine. The 186-residue stretch at 191 to 376 folds into the Glutamine amidotransferase type-1 domain; it reads RLVVYDYGIK…RGMVREAVGR (186 aa). Catalysis depends on C266, which acts as the Nucleophile. L267, Q270, N308, G310, and F311 together coordinate L-glutamine. Catalysis depends on residues H349 and E351.

The protein belongs to the CarA family. Composed of two chains; the small (or glutamine) chain promotes the hydrolysis of glutamine to ammonia, which is used by the large (or ammonia) chain to synthesize carbamoyl phosphate. Tetramer of heterodimers (alpha,beta)4.

The catalysed reaction is hydrogencarbonate + L-glutamine + 2 ATP + H2O = carbamoyl phosphate + L-glutamate + 2 ADP + phosphate + 2 H(+). The enzyme catalyses L-glutamine + H2O = L-glutamate + NH4(+). Its pathway is amino-acid biosynthesis; L-arginine biosynthesis; carbamoyl phosphate from bicarbonate: step 1/1. It functions in the pathway pyrimidine metabolism; UMP biosynthesis via de novo pathway; (S)-dihydroorotate from bicarbonate: step 1/3. Functionally, small subunit of the glutamine-dependent carbamoyl phosphate synthetase (CPSase). CPSase catalyzes the formation of carbamoyl phosphate from the ammonia moiety of glutamine, carbonate, and phosphate donated by ATP, constituting the first step of 2 biosynthetic pathways, one leading to arginine and/or urea and the other to pyrimidine nucleotides. The small subunit (glutamine amidotransferase) binds and cleaves glutamine to supply the large subunit with the substrate ammonia. This is Carbamoyl phosphate synthase small chain from Nitratidesulfovibrio vulgaris (strain DSM 19637 / Miyazaki F) (Desulfovibrio vulgaris).